The chain runs to 271 residues: Sedoheptulose 1,7-bisphosphatase (271 aa).

Residue R12 participates in substrate binding. H13 functions as the Tele-phosphohistidine intermediate in the catalytic mechanism. Substrate is bound by residues 24–25 (YT), R69, 99–102 (EWEY), R181, and H244. Catalysis depends on E99, which acts as the Proton donor/acceptor.

It belongs to the phosphoglycerate mutase family. SHB17 subfamily. Homodimer.

It localises to the cytoplasm. Its subcellular location is the nucleus. The enzyme catalyses D-sedoheptulose 1,7-bisphosphate + H2O = D-sedoheptulose 7-phosphate + phosphate. Functionally, sedoheptulose 1,7-bisphosphatase involved in riboneogenesis. Dephosphorylates sedoheptulose 1,7-bisphosphate (SBP), which is converted via the non-oxidative pentose phosphate pathway to ribose-5-phosphate. Has a fructose 1,6-bisphosphatase activity in vitro, but this is probably not biologically relevant, since deletion does not affect fructose 1,6-biphosphate (FBP) levels. The sequence is that of Sedoheptulose 1,7-bisphosphatase (SHB17) from Saccharomyces cerevisiae (strain ATCC 204508 / S288c) (Baker's yeast).